Consider the following 1336-residue polypeptide: Mating factor M secretion protein mam1 (1336 aa).

The segment at 1–29 (MHIHSDLSLPQFEHASIDPPSYSPQKSSF) is disordered. Residues 1–91 (MHIHSDLSLP…ELAGVSSWSD (91 aa)) lie on the Cytoplasmic side of the membrane. Residues 92–112 (FFYLFHFSDIPLIFGTLIFTC) traverse the membrane as a helical segment. The ABC transmembrane type-1 1 domain occupies 104–396 (IFGTLIFTCL…ILPAIPDLIK (293 aa)). Topologically, residues 113-153 (LSAALEPLMTWTTGKVFDALSQYATSQITLGKMISLINFNS) are extracellular. The helical transmembrane segment at 154-174 (LLITIFGLASCVFSFGVRFLW) threads the bilayer. Residues 175-250 (QYLSAIAGKR…SCLIISFRYS (76 aa)) lie on the Cytoplasmic side of the membrane. The helical transmembrane segment at 251-271 (WSLTLVVLASYPIIILVVGFI) threads the bilayer. The Extracellular segment spans residues 272–778 (NSFLSSAYEK…KSIWKVKKLR (507 aa)). Residues 433–668 (FRFDNVSFAY…EDFENNVSID (236 aa)) enclose the ABC transporter 1 domain. N-linked (GlcNAc...) asparagine glycans are attached at residues N437 and N454. 469 to 476 (GPSGSGKS) lines the ATP pocket. N536, N664, and N697 each carry an N-linked (GlcNAc...) asparagine glycan. Residues 779–799 (WFFLLGLLTSLIQGASVPIFA) traverse the membrane as a helical segment. An ABC transmembrane type-1 2 domain is found at 781-1066 (FLLGLLTSLI…CIMSLPNVSA (286 aa)). Residues 800 to 897 (YVISKCLNLF…ISDMRNMISS (98 aa)) lie on the Cytoplasmic side of the membrane. Residues 898-918 (LIEEVFIAFTMAIIGIAWSFA) form a helical membrane-spanning segment. The Extracellular portion of the chain corresponds to 919-1336 (TGWRLAAVLV…KLIHRGEWIE (418 aa)). 3 N-linked (GlcNAc...) asparagine glycosylation sites follow: N1011, N1063, and N1120. An ABC transporter 2 domain is found at 1099–1331 (IEFDGVSFAY…HTHFWKLIHR (233 aa)). 1135–1142 (GISGSGKS) lines the ATP pocket. 2 N-linked (GlcNAc...) asparagine glycosylation sites follow: N1235 and N1280.

This sequence belongs to the ABC transporter superfamily. Alpha-factor sex pheromone exporter (TC 3.A.1.206) family.

It localises to the membrane. In terms of biological role, required in S.pombe M (minus) cells for production of M-factor pheromone. Involved in the transport of the farnesyl-derivation of the M-factor pheromone. The protein is Mating factor M secretion protein mam1 (mam1) of Schizosaccharomyces pombe (strain 972 / ATCC 24843) (Fission yeast).